The primary structure comprises 201 residues: Small ribosomal subunit protein uS4c (201 aa).

Positions 20 to 44 (GLTSKRPRAGSDLRNQSRSGKKSQY) are disordered. The region spanning 89–152 (MRLDNILFRL…NSRTLVQNLL (64 aa)) is the S4 RNA-binding domain.

It belongs to the universal ribosomal protein uS4 family. As to quaternary structure, part of the 30S ribosomal subunit. Contacts protein S5. The interaction surface between S4 and S5 is involved in control of translational fidelity.

The protein localises to the plastid. Its subcellular location is the chloroplast. One of the primary rRNA binding proteins, it binds directly to 16S rRNA where it nucleates assembly of the body of the 30S subunit. Its function is as follows. With S5 and S12 plays an important role in translational accuracy. This Arabis hirsuta (Hairy rock-cress) protein is Small ribosomal subunit protein uS4c (rps4).